A 221-amino-acid polypeptide reads, in one-letter code: NEDD4 family-interacting protein 1 (221 aa).

Alanine 2 bears the N-acetylalanine mark. Residues 2–41 (ALALAALAAVEPACGSRYQQLQNEEESGEPEQAAGDAPPP) form an interaction with UBE2L3 region. At 2-116 (ALALAALAAV…ADQLRIGNDG (115 aa)) the chain is on the cytoplasmic side. The disordered stretch occupies residues 18 to 45 (RYQQLQNEEESGEPEQAAGDAPPPYSSI). 3 short sequence motifs (PPxY motif) span residues 39–42 (PPPY), 64–67 (PPSY), and 74–76 (PSY). The interaction with ITCH stretch occupies residues 42-76 (YSSISAESAAYFDYKDESGFPKPPSYNVATTLPSY). A helical transmembrane segment spans residues 117–137 (IFMLTFFMAFLFNWIGFFLSF). Topologically, residues 138–143 (CLTTSA) are extracellular. A helical membrane pass occupies residues 144 to 164 (AGRYGAISGFGLSLIKWILIV). The Cytoplasmic segment spans residues 165-172 (RFSTYFPG). A helical membrane pass occupies residues 173–193 (YFDGQYWLWWVFLVLGFLLFL). Residues 194 to 221 (RGFINYAKVRKMPETFSNLPRTRVLFIY) lie on the Extracellular side of the membrane.

Forms heterodimers with NDFIP2. Interacts with several E3 ubiquitin-protein ligases, including ITCH, NEDD4, NEDD4L and WWP2. The interaction with NEDD4, NEDD4L and ITCH leads to relocalization of these proteins to exosomes and eventually to exosomal secretion. Interacts with U2SURP. Interacts with SLC11A2/DMT1. Interacts with PTEN. May interact with phosphorylated EGFR. Interacts with BRAT1. Interacts with KCNH2. Interacts with MAVS. Part of a complex containing ITCH, NDFIP1 and MAP3K7. Interacts (via N-terminus) with UBE2L3; the interaction mediates recruitment of UBE2L3 to ITCH. Post-translationally, ubiquitinated by NEDD4 and ITCH; mono-, di- and polyubiquitinated forms are detected. Ubiquitination regulates its degradation. Undergoes transient tyrosine phosphorylation following EGF stimulation, most probably by catalyzed by SRC. Phosphorylation SRC is enhanced in the presence of NDFIP2 which may act as a scaffold to recruit SRC to NDFIP1. Widely expressed. Higher levels are detected in cerebellum, pituitary, thalamus, kidney, liver, testis, salivary glands and placenta. Also expressed in fetal brain, kidney and lung.

It localises to the endosome membrane. The protein localises to the golgi apparatus membrane. It is found in the synapse. Its subcellular location is the synaptosome. The protein resides in the cell projection. It localises to the dendrite. The protein localises to the secreted. In terms of biological role, activates HECT domain-containing E3 ubiquitin-protein ligases, including NEDD4 and ITCH, and consequently modulates the stability of their targets. As a result, controls many cellular processes. Prevents chronic T-helper cell-mediated inflammation by activating ITCH and thus controlling JUNB degradation. Promotes pancreatic beta cell death through degradation of JUNB and inhibition of the unfolded protein response, leading to reduction of insulin secretion. Restricts the production of pro-inflammatory cytokines in effector Th17 T-cells by promoting ITCH-mediated ubiquitination and degradation of RORC. Together with NDFIP2, limits the cytokine signaling and expansion of effector Th2 T-cells by promoting degradation of JAK1, probably by ITCH- and NEDD4L-mediated ubiquitination. Regulates peripheral T-cell tolerance to self and foreign antigens, forcing the exit of naive CD4+ T-cells from the cell cycle before they become effector T-cells. Negatively regulates RLR-mediated antiviral response by promoting SMURF1-mediated ubiquitination and subsequent degradation of MAVS. Negatively regulates KCNH2 potassium channel activity by decreasing its cell-surface expression and interfering with channel maturation through recruitment of NEDD4L to the Golgi apparatus where it mediates KCNH2 degradation. In cortical neurons, mediates the ubiquitination of the divalent metal transporter SLC11A2/DMT1 by NEDD4L, leading to its down-regulation and protection of the cells from cobalt and iron toxicity. Important for normal development of dendrites and dendritic spines in cortex. Enhances the ubiquitination of BRAT1 mediated by: NEDD4, NEDD4L and ITCH and is required for the nuclear localization of ubiquitinated BRAT1. Enhances the ITCH-mediated ubiquitination of MAP3K7 by recruiting E2 ubiquitin-conjugating enzyme UBE2L3 to ITCH. Modulates EGFR signaling through multiple pathways. In particular, may regulate the ratio of AKT1-to-MAPK8 signaling in response to EGF, acting on AKT1 probably through PTEN destabilization and on MAPK8 through ITCH-dependent MAP2K4 inactivation. As a result, may control cell growth rate. Inhibits cell proliferation by promoting PTEN nuclear localization and changing its signaling specificity. The chain is NEDD4 family-interacting protein 1 (NDFIP1) from Homo sapiens (Human).